The following is a 69-amino-acid chain: Small archaeal modifier protein 2 (69 aa).

A Glycyl lysine isopeptide (Lys-Gly) (interchain with G-Cter in SAMP2) cross-link involves residue Lys-55. Gly-69 bears the 1-thioglycine; alternate mark. Position 69 is a glycyl adenylate; alternate (Gly-69). Gly-69 is covalently cross-linked (Glycyl lysine isopeptide (Gly-Lys) (interchain with K-? in acceptor proteins); alternate).

The C-terminal glycine is likely acyl-adenylated (-COAMP) by UbaA, and also probably thiocarboxylated (-COSH) to function in sulfur transfer.

Functionally, functions as a protein modifier covalently attached to lysine residues of substrate proteins, as well as a sulfur carrier in tRNA thiolation. The protein modification process is termed sampylation and involves the formation of an isopeptide bond between the SAMP2 C-terminal glycine carboxylate and the epsilon-amino group of lysine residues on target proteins. Is able to form polymeric chains with itself likely at Lys-55, similar to ubiquitin and other ubiquitin-like proteins. May serve as a proteolytic signal in the cell to target proteins for degradation by proteasomes. This is Small archaeal modifier protein 2 from Pyrococcus furiosus (strain ATCC 43587 / DSM 3638 / JCM 8422 / Vc1).